The primary structure comprises 145 residues: Large ribosomal subunit protein uL13 (145 aa).

It belongs to the universal ribosomal protein uL13 family. Part of the 50S ribosomal subunit.

This protein is one of the early assembly proteins of the 50S ribosomal subunit, although it is not seen to bind rRNA by itself. It is important during the early stages of 50S assembly. The polypeptide is Large ribosomal subunit protein uL13 (Bacillus thuringiensis (strain Al Hakam)).